Here is a 915-residue protein sequence, read N- to C-terminus: Translation initiation factor IF-2 (915 aa).

2 disordered regions span residues 1-105 (MSEG…RALT) and 121-295 (VEAA…RAAI). The span at 57–81 (PGTPSAPEGGSSSAPAPQSGNAPQG) shows a compositional bias: low complexity. Residues 84–101 (RSGGGNRGSGRGGAGGAG) are compositionally biased toward gly residues. 2 stretches are compositionally biased toward basic and acidic residues: residues 121 to 135 (VEAA…EQEK) and 143 to 180 (EEAR…RKAA). Residues 186 to 195 (AEAPPVPPPA) show a composition bias toward pro residues. Low complexity-rich tracts occupy residues 201–213 (AAPS…SRTA) and 230–239 (KVPVAAPSAP). The segment covering 243 to 256 (RLRERGDEGEEERK) has biased composition (basic and acidic residues). Positions 266–278 (PAPRKAAAPVAKK) are enriched in low complexity. Residues 279–295 (AVAEPRRGGRIDVRAAI) are compositionally biased toward basic and acidic residues. In terms of domain architecture, tr-type G spans 414–584 (PRPPVVTVMG…LLQAEVLDLK (171 aa)). The interval 423 to 430 (GHVDHGKT) is G1. 423 to 430 (GHVDHGKT) is a GTP binding site. The segment at 448–452 (GITQH) is G2. Residues 470 to 473 (DTPG) are G3. GTP-binding positions include 470–474 (DTPGH) and 524–527 (NKCD). The G4 stretch occupies residues 524–527 (NKCD). Positions 560–562 (SAL) are G5.

The protein belongs to the TRAFAC class translation factor GTPase superfamily. Classic translation factor GTPase family. IF-2 subfamily.

It localises to the cytoplasm. One of the essential components for the initiation of protein synthesis. Protects formylmethionyl-tRNA from spontaneous hydrolysis and promotes its binding to the 30S ribosomal subunits. Also involved in the hydrolysis of GTP during the formation of the 70S ribosomal complex. This Granulibacter bethesdensis (strain ATCC BAA-1260 / CGDNIH1) protein is Translation initiation factor IF-2.